The sequence spans 172 residues: Stellate protein CG33243 (172 aa).

Belongs to the casein kinase 2 subunit beta family. As to quaternary structure, interacts in vitro with the casein kinase 2 alpha subunit (CkII-alpha). The relevance of such interaction is however unclear in vivo. In terms of tissue distribution, probably not expressed in wild-type flies. In males lacking the Y chromosome, it is testis-specific and constitutes the main component of star-shaped crystals.

In terms of biological role, unknown. In males lacking the Y chromosome, its strong overexpression leads to the appearance of proteinaceous star-shaped crystals in the primary spermatocytes causing meiotic drive, possibly by interfering with normal casein kinase 2 activity. This is Stellate protein CG33243 (Ste:CG33243) from Drosophila melanogaster (Fruit fly).